A 177-amino-acid polypeptide reads, in one-letter code: NADH-quinone oxidoreductase subunit B (177 aa).

[4Fe-4S] cluster contacts are provided by Cys-56, Cys-57, Cys-121, and Cys-151.

This sequence belongs to the complex I 20 kDa subunit family. In terms of assembly, NDH-1 is composed of 14 different subunits. Subunits NuoB, C, D, E, F, and G constitute the peripheral sector of the complex. It depends on [4Fe-4S] cluster as a cofactor.

The protein resides in the cell inner membrane. The enzyme catalyses a quinone + NADH + 5 H(+)(in) = a quinol + NAD(+) + 4 H(+)(out). In terms of biological role, NDH-1 shuttles electrons from NADH, via FMN and iron-sulfur (Fe-S) centers, to quinones in the respiratory chain. Couples the redox reaction to proton translocation (for every two electrons transferred, four hydrogen ions are translocated across the cytoplasmic membrane), and thus conserves the redox energy in a proton gradient. This is NADH-quinone oxidoreductase subunit B from Roseobacter denitrificans (strain ATCC 33942 / OCh 114) (Erythrobacter sp. (strain OCh 114)).